Consider the following 445-residue polypeptide: Methionine aminopeptidase 2 (445 aa).

Residues 1–80 are disordered; the sequence is MAAQVASGVG…TSKVQTEPPR (80 aa). The span at 57-71 shows a compositional bias: basic residues; that stretch reads AKKKKKKTKKKKKGT. Residue His-195 participates in substrate binding. The a divalent metal cation site is built by Asp-215, Asp-226, and His-295. Substrate is bound at residue His-303. A divalent metal cation-binding residues include Glu-331 and Glu-426.

This sequence belongs to the peptidase M24A family. Methionine aminopeptidase eukaryotic type 2 subfamily. Co(2+) is required as a cofactor. The cofactor is Zn(2+). It depends on Mn(2+) as a cofactor. Fe(2+) serves as cofactor.

The protein resides in the cytoplasm. It catalyses the reaction Release of N-terminal amino acids, preferentially methionine, from peptides and arylamides.. In terms of biological role, cotranslationally removes the N-terminal methionine from nascent proteins. The N-terminal methionine is often cleaved when the second residue in the primary sequence is small and uncharged (Met-Ala-, Cys, Gly, Pro, Ser, Thr, or Val). The protein is Methionine aminopeptidase 2 of Paracoccidioides brasiliensis (strain Pb18).